The sequence spans 1058 residues: MSKRKDIQKIMVIGSGPIIIGQAAEFDYAGTQACLALKEEGYKVILVNSNPATIMTDKEIADKVYIEPLTLEFVNRIIRKERPDAILPTLGGQTGLNMAMALSKAGILDDLEIELLGTKLSAIDQAEDRDLFKQLMQELDQPIPESTIVKTVDEAVTFARDIGYPVIVRPAFTLGGTGGGICSSEEELCEITENGLKLSPVTQCLIERSIAGFKEIEYEVMRDSADNALVVCNMENFDPVGIHTGDSIVFAPTQTLSDIENQMLRDASLKIIRALKIEGGCNVQLALDPYSFKYYVIEVNPRVSRSSALASKATGYPIAKLAAKIAVGLTLDEMTNPITGTTYAMFEPALDYVVAKIPRFPFDKFEHGERQLGTQMKATGEVMAIGRNLEESLLKACRSLEIGVCHNEMTSLSNISDEELVTKVIKAQDDRLFYLSEAIRRGYSIEELESLTKIDLFFLDKLLHIVEIEQELQMHVDHLESLKKAKRYGFSDQKIAEIWQKDESDIRAMRHSHSLYPVYKMVDTCAAEFDAKTPYFYSTYELENESVQSNKESILVLGSGPIRIGQGVEFDYATVHSVKAIQKAGYEAIIMNSNPETVSTDFSVSDKLYFEPLTFEDVMNVIDLEQPKGVIVQFGGQTAINLAQSLSDAGVTILGTQVEDLDRAEDRDLFEKALKELGIPQPQGQTATNEEEALEAAKKIGFPVLVRPSYVLGGRAMEIVENKEDLREYIRTAVKASPEHPILVDSYIFGKECEVDAISDGKSVLIPGIMEHIERAGVHSGDSMAVYPPQQLSKQIQETIAEYTKRLAIGLNCIGMMNVQFVIKNEQVYVIEVNPRASRTVPFLSKVTGIPMAQIATKLILGQTLKDLGYEDGLYPQSQLVHIKAPVFSFTKLAQVDSLLGPEMKSTGEVMGSDTSLEKALYKAFEANNSHLSEFGQIVFTIADDSKAEALSLARRFKAIGYQIMATQGTAAYFAEQGLSACLVGKIGDAANDIPTLVRHGHVQAIVNTVGIKRTADKDGQMIRSSAIEQGVPLFTALDTAKAMLTVLESRCFNIEAI.

A carboxyphosphate synthetic domain region spans residues 1-401 (MSKRKDIQKI…SLLKACRSLE (401 aa)). ATP contacts are provided by R129, R169, G175, G176, R208, I210, E215, G241, I242, H243, Q284, and E298. Positions 133–327 (KQLMQELDQP…IAKLAAKIAV (195 aa)) constitute an ATP-grasp 1 domain. Mg(2+) is bound by residues Q284, E298, and N300. 3 residues coordinate Mn(2+): Q284, E298, and N300. An oligomerization domain region spans residues 402 to 546 (IGVCHNEMTS…YSTYELENES (145 aa)). A carbamoyl phosphate synthetic domain region spans residues 547–929 (VQSNKESILV…ALYKAFEANN (383 aa)). An ATP-grasp 2 domain is found at 671 to 861 (EKALKELGIP…MAQIATKLIL (191 aa)). ATP is bound by residues R707, S746, I748, E752, G777, V778, H779, S780, Q820, and E832. Mg(2+) contacts are provided by Q820, E832, and N834. The Mn(2+) site is built by Q820, E832, and N834. The MGS-like domain occupies 930–1058 (SHLSEFGQIV…ESRCFNIEAI (129 aa)). The allosteric domain stretch occupies residues 930-1058 (SHLSEFGQIV…ESRCFNIEAI (129 aa)).

Belongs to the CarB family. In terms of assembly, composed of two chains; the small (or glutamine) chain promotes the hydrolysis of glutamine to ammonia, which is used by the large (or ammonia) chain to synthesize carbamoyl phosphate. Tetramer of heterodimers (alpha,beta)4. Mg(2+) serves as cofactor. The cofactor is Mn(2+).

It carries out the reaction hydrogencarbonate + L-glutamine + 2 ATP + H2O = carbamoyl phosphate + L-glutamate + 2 ADP + phosphate + 2 H(+). The catalysed reaction is hydrogencarbonate + NH4(+) + 2 ATP = carbamoyl phosphate + 2 ADP + phosphate + 2 H(+). The protein operates within amino-acid biosynthesis; L-arginine biosynthesis; carbamoyl phosphate from bicarbonate: step 1/1. Its pathway is pyrimidine metabolism; UMP biosynthesis via de novo pathway; (S)-dihydroorotate from bicarbonate: step 1/3. Large subunit of the glutamine-dependent carbamoyl phosphate synthetase (CPSase). CPSase catalyzes the formation of carbamoyl phosphate from the ammonia moiety of glutamine, carbonate, and phosphate donated by ATP, constituting the first step of 2 biosynthetic pathways, one leading to arginine and/or urea and the other to pyrimidine nucleotides. The large subunit (synthetase) binds the substrates ammonia (free or transferred from glutamine from the small subunit), hydrogencarbonate and ATP and carries out an ATP-coupled ligase reaction, activating hydrogencarbonate by forming carboxy phosphate which reacts with ammonia to form carbamoyl phosphate. The sequence is that of Carbamoyl phosphate synthase large chain from Streptococcus pyogenes serotype M5 (strain Manfredo).